Reading from the N-terminus, the 508-residue chain is Photosystem II CP47 reaction center protein (508 aa).

6 helical membrane-spanning segments follow: residues 21 to 36 (SVHLMHTALVSGWAGS), 101 to 115 (IVLSGLLFLASIWHW), 140 to 156 (GIHLFLSGLLCFGFGAF), 203 to 218 (IAAGILGILAGLFHLT), 237 to 252 (VLSSSIAAVFWAAFVV), and 457 to 472 (CFALLFFFGHIWHGAR).

Belongs to the PsbB/PsbC family. PsbB subfamily. PSII is composed of 1 copy each of membrane proteins PsbA, PsbB, PsbC, PsbD, PsbE, PsbF, PsbH, PsbI, PsbJ, PsbK, PsbL, PsbM, PsbT, PsbX, PsbY, PsbZ, Psb30/Ycf12, at least 3 peripheral proteins of the oxygen-evolving complex and a large number of cofactors. It forms dimeric complexes. It depends on Binds multiple chlorophylls. PSII binds additional chlorophylls, carotenoids and specific lipids. as a cofactor.

The protein localises to the plastid. It localises to the chloroplast thylakoid membrane. Its function is as follows. One of the components of the core complex of photosystem II (PSII). It binds chlorophyll and helps catalyze the primary light-induced photochemical processes of PSII. PSII is a light-driven water:plastoquinone oxidoreductase, using light energy to abstract electrons from H(2)O, generating O(2) and a proton gradient subsequently used for ATP formation. This Chlorokybus atmophyticus (Soil alga) protein is Photosystem II CP47 reaction center protein.